Consider the following 82-residue polypeptide: MVDINQIPTRRPFHRRRKTCPFSGANAPKIDYKDVKLLQRYISERGKIVPSRITAVSQKKQRELAKAIKRARFLGLLPYVVK.

The interval 1-20 is disordered; sequence MVDINQIPTRRPFHRRRKTC.

Belongs to the bacterial ribosomal protein bS18 family. Part of the 30S ribosomal subunit. Forms a tight heterodimer with protein bS6.

Its function is as follows. Binds as a heterodimer with protein bS6 to the central domain of the 16S rRNA, where it helps stabilize the platform of the 30S subunit. The polypeptide is Small ribosomal subunit protein bS18 (Brucella abortus (strain 2308)).